A 1182-amino-acid polypeptide reads, in one-letter code: CRISPR-associated endoribonuclease Cas13a (1182 aa).

Residues 132–279 adopt a coiled-coil conformation; that stretch reads FNNLIEKVQN…ENNSDNKLKQ (148 aa). The interval 366–508 is HEPN-like fold 1; that stretch reads YIKNTGQLET…NNEEIKGYFI (143 aa). Positions 896–955 form a coiled coil; sequence KVEKENIEDYNKKEEIEQKKKSNIEKLQDLKVELHKKWEQNKITEKEIEKYNNTTRKINE. The interval 965 to 1120 is HEPN-like fold 2; the sequence is LQNVYLLHEM…QNHILKSTKT (156 aa).

This sequence belongs to the CRISPR-associated endoribonuclease Cas13a family. A divalent metal cation serves as cofactor.

With respect to regulation, target RNA acts as an activator for non-specific ssRNA degradation. CRISPR (clustered regularly interspaced short palindromic repeat), is an adaptive immune system that provides protection against mobile genetic elements (viruses, transposable elements and conjugative plasmids). CRISPR clusters contain sequences complementary to antecedent mobile elements and target invading nucleic acids. Unlike many single-component effectors, this CRISPR-Cas system targets RNA. CRISPR clusters are transcribed from pre-CRISPR RNA (crRNA) and processed into crRNA by this protein. Cleaves linear target ssRNA in a pre-crRNA-dependent fashion, preferentially before U residues. Binding a viable target RNA target activates this protein for non-specific RNA degradation in vitro (called collateral RNA degradation), which is fairly sensitive as it requires picomolar levels of viable target RNA. The chain is CRISPR-associated endoribonuclease Cas13a from Leptotrichia wadei (strain F0279).